A 109-amino-acid polypeptide reads, in one-letter code: Putative pterin-4-alpha-carbinolamine dehydratase (109 aa).

Belongs to the pterin-4-alpha-carbinolamine dehydratase family.

The catalysed reaction is (4aS,6R)-4a-hydroxy-L-erythro-5,6,7,8-tetrahydrobiopterin = (6R)-L-erythro-6,7-dihydrobiopterin + H2O. This Rickettsia canadensis (strain McKiel) protein is Putative pterin-4-alpha-carbinolamine dehydratase.